The chain runs to 123 residues: Basic phospholipase A2 Ph-TX1 (123 aa).

3 residues coordinate Ca(2+): Y27, G29, and G31. 6 disulfides stabilise this stretch: C28-C45, C44-C96, C50-C123, C51-C89, C59-C83, and C77-C87. Residue H48 is part of the active site. Residue D49 participates in Ca(2+) binding. The active site involves D90.

The protein belongs to the phospholipase A2 family. Group II subfamily. D49 sub-subfamily. As to quaternary structure, monomer. Requires Ca(2+) as cofactor. In terms of tissue distribution, expressed by the venom gland.

Its subcellular location is the secreted. The enzyme catalyses a 1,2-diacyl-sn-glycero-3-phosphocholine + H2O = a 1-acyl-sn-glycero-3-phosphocholine + a fatty acid + H(+). With respect to regulation, inhibited by divalent cations different from calcium ions (cadmium, magnesium, manganese, zinc), since they act as competitive antagonists of this cofactor. Functionally, snake venom phospholipase A2 (PLA2) that induces in vivo myotoxicity, moderates footpad edema, and causes in vitro neuromuscular blockade. PLA2 catalyzes the calcium-dependent hydrolysis of the 2-acyl groups in 3-sn-phosphoglycerides. In Bothrocophias hyoprora (Amazonian hognose viper), this protein is Basic phospholipase A2 Ph-TX1.